A 96-amino-acid chain; its full sequence is Small ribosomal subunit protein bS6 (96 aa).

The protein belongs to the bacterial ribosomal protein bS6 family.

Functionally, binds together with bS18 to 16S ribosomal RNA. In Salinispora arenicola (strain CNS-205), this protein is Small ribosomal subunit protein bS6.